The sequence spans 185 residues: Protein DP71L (185 aa).

Basic residues predominate over residues 1–15 (MSRRNKKRSRRRRKK). The tract at residues 1–38 (MSRRNKKRSRRRRKKPLNDIQPGPSKSSAQDEPIKSVS) is disordered. Important for host CHOP inhibition stretches follow at residues 126 to 128 (VHF) and 170 to 174 (LSTVF).

Belongs to the asfivirus DP71L family. Interacts (via C-terminus) with host PPP1CB.

In terms of biological role, interacts with the host phosphatase PP1 catalytic subunit (PPP1CB) and recruits it to dephosphorylate EIF2S1/eIF2alpha and therefore restores the host translation that has been shut-down by the host. Also inhibits the EIF2S1/eIF2alpha-ATF4-DDIT3/CHOP pathway. The chain is Protein DP71L from African swine fever virus (isolate Pig/Kenya/KEN-50/1950) (ASFV).